Reading from the N-terminus, the 213-residue chain is Small ribosomal subunit protein uS4 (213 aa).

The tract at residues G16 to S53 is disordered. A compositionally biased stretch (polar residues) spans V44–S53. In terms of domain architecture, S4 RNA-binding spans S97–K163.

Belongs to the universal ribosomal protein uS4 family. As to quaternary structure, part of the 30S ribosomal subunit. Contacts protein S5. The interaction surface between S4 and S5 is involved in control of translational fidelity.

In terms of biological role, one of the primary rRNA binding proteins, it binds directly to 16S rRNA where it nucleates assembly of the body of the 30S subunit. With S5 and S12 plays an important role in translational accuracy. This Psychrobacter arcticus (strain DSM 17307 / VKM B-2377 / 273-4) protein is Small ribosomal subunit protein uS4.